A 287-amino-acid chain; its full sequence is MARRRKEVQRGESRSHRSRTRSKTAHHRKFSRRQLRPSLRARLNAGIRCHNRFYRALVRSLEEVFEGGGDGRLAYTIIPQCKPAGGKIVVMFEVNLGLRKPDCICLLETQHEMKCIVIELKTCRFSKSLMTESKLRQGYTGTLQLRDSARLLENLAVPGTEKVKILSLLVFVAQRGMNILAVKTVGETVINVSSELFFVTLATRSQYLKTFCAKLEPRVSHARSKYQQESAKNADLASPAPSALQTVAALFSSRVGKESATKPASYSTSTEESKNLSEPCFDPDSNL.

2 disordered regions span residues 1–33 (MARRRKEVQRGESRSHRSRTRSKTAHHRKFSRR) and 254–287 (RVGKESATKPASYSTSTEESKNLSEPCFDPDSNL). Positions 16 to 33 (HRSRTRSKTAHHRKFSRR) are enriched in basic residues.

The protein belongs to the herpesviridae UL24 family.

It localises to the virion. The protein localises to the host cytoplasm. It is found in the host nucleus. The protein resides in the host nucleolus. Its subcellular location is the host Golgi apparatus. May participate in nuclear egress of viral particles. Plays a role in the dispersal of several host nucleolar proteins including NCL/nucleolin and NPM1. Since deletion of host NCL/nucleolin negatively impact on nuclear egress, UL24 supposedly acts on this process through its effect on host nucleoli. The polypeptide is Protein UL24 homolog (Infectious laryngotracheitis virus (strain Thorne V882) (ILTV)).